The sequence spans 407 residues: 8-amino-7-oxononanoate synthase (407 aa).

Substrate is bound at residue arginine 24. Position 111–112 (111–112) interacts with pyridoxal 5'-phosphate; sequence GF. Histidine 137 is a binding site for substrate. 3 residues coordinate pyridoxal 5'-phosphate: serine 183, histidine 211, and threonine 239. An N6-(pyridoxal phosphate)lysine modification is found at lysine 242. Position 356 (threonine 356) interacts with substrate.

Belongs to the class-II pyridoxal-phosphate-dependent aminotransferase family. BioF subfamily. As to quaternary structure, homodimer. It depends on pyridoxal 5'-phosphate as a cofactor.

It carries out the reaction 6-carboxyhexanoyl-[ACP] + L-alanine + H(+) = (8S)-8-amino-7-oxononanoate + holo-[ACP] + CO2. The protein operates within cofactor biosynthesis; biotin biosynthesis. Functionally, catalyzes the decarboxylative condensation of pimeloyl-[acyl-carrier protein] and L-alanine to produce 8-amino-7-oxononanoate (AON), [acyl-carrier protein], and carbon dioxide. The polypeptide is 8-amino-7-oxononanoate synthase (Stenotrophomonas maltophilia (strain R551-3)).